A 697-amino-acid polypeptide reads, in one-letter code: Portal protein (697 aa).

The interval M633–H697 is disordered. The segment covering I664 to R689 has biased composition (basic and acidic residues).

It belongs to the herpesviridae portal protein family. In terms of assembly, homododecamerizes. Interacts with terminase subunits TRM1 and TRM3.

It is found in the virion. The protein localises to the host nucleus. Its function is as follows. Forms a portal in the viral capsid through which viral DNA is translocated during DNA packaging. Assembles as a dodecamer at a single fivefold axe of the T=16 icosahedric capsid. Binds to the molecular motor that translocates the viral DNA, termed terminase. In Homo sapiens (Human), this protein is Portal protein (UL104).